Reading from the N-terminus, the 243-residue chain is Sec-independent protein translocase protein TatC (243 aa).

Transmembrane regions (helical) follow at residues 18–38 (VIII…NYVD), 70–90 (IAII…IWSF), 106–126 (MIPV…FTVF), 132–152 (FLLQ…KYIS), 153–173 (FALN…VVYI), 191–211 (YALL…DVIS), and 213–233 (LLMA…AKFI).

The protein belongs to the TatC family. Forms a complex with TatA.

The protein resides in the cell membrane. Part of the twin-arginine translocation (Tat) system that transports large folded proteins containing a characteristic twin-arginine motif in their signal peptide across membranes. This chain is Sec-independent protein translocase protein TatC, found in Carboxydothermus hydrogenoformans (strain ATCC BAA-161 / DSM 6008 / Z-2901).